The primary structure comprises 447 residues: D-ribitol-5-phosphate cytidylyltransferase (447 aa).

This sequence belongs to the IspD/TarI cytidylyltransferase family. IspD subfamily. In terms of assembly, homodimer.

It localises to the cytoplasm. Its subcellular location is the cytosol. The enzyme catalyses D-ribitol 5-phosphate + CTP + H(+) = CDP-L-ribitol + diphosphate. It carries out the reaction D-ribose 5-phosphate + CTP + H(+) = CDP-D-ribose + diphosphate. The catalysed reaction is D-ribulose 5-phosphate + CTP + H(+) = CDP-D-ribulose + diphosphate. Its pathway is protein modification; protein glycosylation. In terms of biological role, cytidylyltransferase required for protein O-linked mannosylation. Catalyzes the formation of CDP-ribitol nucleotide sugar from D-ribitol 5-phosphate. CDP-ribitol is a substrate of FKTN during the biosynthesis of the phosphorylated O-mannosyl trisaccharide (N-acetylgalactosamine-beta-3-N-acetylglucosamine-beta-4-(phosphate-6-)mannose), a carbohydrate structure present in alpha-dystroglycan (DAG1), which is required for binding laminin G-like domain-containing extracellular proteins with high affinity. Shows activity toward other pentose phosphate sugars and mediates formation of CDP-ribulose or CDP-ribose using CTP and ribulose-5-phosphate or ribose-5-phosphate, respectively. Not involved in dolichol production. This chain is D-ribitol-5-phosphate cytidylyltransferase (Crppa), found in Mus musculus (Mouse).